The following is a 24-amino-acid chain: Unknown protein 3 (24 aa).

The polypeptide is Unknown protein 3 (Pseudotsuga menziesii (Douglas-fir)).